The primary structure comprises 377 residues: Nitric oxide reductase FlRd-NAD(+) reductase (377 aa).

Belongs to the FAD-dependent oxidoreductase family. FAD serves as cofactor.

The protein localises to the cytoplasm. The enzyme catalyses 2 reduced [nitric oxide reductase rubredoxin domain] + NAD(+) + H(+) = 2 oxidized [nitric oxide reductase rubredoxin domain] + NADH. Its pathway is nitrogen metabolism; nitric oxide reduction. Functionally, one of at least two accessory proteins for anaerobic nitric oxide (NO) reductase. Reduces the rubredoxin moiety of NO reductase. This chain is Nitric oxide reductase FlRd-NAD(+) reductase, found in Klebsiella pneumoniae subsp. pneumoniae (strain ATCC 700721 / MGH 78578).